The following is a 1186-amino-acid chain: Atrophin-1 (1186 aa).

Disordered stretches follow at residues 1 to 604 (MKTR…PTVT), 618 to 763 (ASSP…ARFN), and 781 to 858 (VPLE…HRPP). Residues 16–32 (RKKEAPGPREELRSRGR) carry the Nuclear localization signal motif. A compositionally biased stretch (basic and acidic residues) spans 17-29 (KKEAPGPREELRS). Phosphoserine is present on serine 34. The segment covering 45-63 (GKAEKSRQTAKKARVEEAS) has biased composition (basic and acidic residues). A phosphoserine mark is found at serine 77, serine 79, serine 100, serine 102, and serine 106. Basic and acidic residues predominate over residues 107–127 (LDGRSLNDDGSSDPRDIDQDN). Residues 128–151 (RSTSPSIYSPGSVENDSDSSSGLS) show a composition bias toward polar residues. A compositionally biased stretch (pro residues) spans 157–173 (PYHPPPLFPPSPQPPDS). 3 stretches are compositionally biased toward low complexity: residues 258-270 (PISVSSSGASGAP), 349-365 (PTLAPSPHSLPPASSSA), and 375-396 (SSSSSSSAAASSSSSSSSSSAS). The segment covering 416–437 (SLSVSNQPPKYTQPSLPSQAVW) has biased composition (polar residues). The span at 484 to 503 (QQQQQQQQQQQQQQQHHGNS) shows a compositional bias: low complexity. The segment at 513–563 (HPLEGGSSHHAHPYAMSPSLGSLRPYPPGPAHLPPPHSQVSYSQAGPNGPP) is involved in binding BAIAP2. Residues 537–549 (PYPPGPAHLPPPH) are compositionally biased toward pro residues. Low complexity-rich tracts occupy residues 565–582 (SSSSNSSSSTSQGSYPCS) and 618–628 (ASSPAGYKTAS). Residue serine 628 is modified to Phosphoserine. Residue lysine 637 is modified to N6-acetyllysine. Threonine 649 is modified (phosphothreonine). A Phosphoserine modification is found at serine 657. Threonine 665 is modified (phosphothreonine). Composition is skewed to pro residues over residues 689–714 (GPGPLPPAGPSGLPSLPPPPAAPASG) and 735–748 (SPVPPARSPSPPPK). Serine 735 is subject to Phosphoserine; by MAPK8. Serine 742 and serine 744 each carry phosphoserine. A compositionally biased stretch (basic and acidic residues) spans 791 to 835 (KRADLVEKVRREAEQRAREEKEREREREREKEREREKERELERSV). Residues 875 to 890 (DTPALRTLSEYARPHV) are required for interaction with FAT1. Serine 892 is modified (phosphoserine). The Nuclear export signal signature appears at 1029–1037 (ALGNDPLAR). Arginine 1111 carries the post-translational modification Asymmetric dimethylarginine. Lysine 1179 is covalently cross-linked (Glycyl lysine isopeptide (Lys-Gly) (interchain with G-Cter in SUMO2)).

Interacts with NR2E1; the interaction represses the transcriptional activity of NR2E1. Interacts with BAIAP2, WWP1, WWP2, WWP3 and RERE. Interacts (via its N-terminus) with MTG8; the interaction enhances transcriptional repression of MTG8. Interacts with FAT1 (via a C-terminal domain). Interacts with PQBP1. Phosphorylated in vitro by MAPK8/JNK1 on Ser-735.

The protein localises to the nucleus. The protein resides in the cytoplasm. Its subcellular location is the perinuclear region. It is found in the cell junction. In terms of biological role, transcriptional corepressor. Corepressor of MTG8 transcriptional repression. Recruits NR2E1 to repress transcription. Has some intrinsic repression activity. Promotes vascular smooth cell (VSMC) migration and orientation. The protein is Atrophin-1 (ATN1) of Pan troglodytes (Chimpanzee).